A 339-amino-acid chain; its full sequence is Glucokinase (339 aa).

ATP is bound at residue 16–21 (GDIGGT).

Belongs to the bacterial glucokinase family.

The protein resides in the cytoplasm. It carries out the reaction D-glucose + ATP = D-glucose 6-phosphate + ADP + H(+). This Pseudomonas paraeruginosa (strain DSM 24068 / PA7) (Pseudomonas aeruginosa (strain PA7)) protein is Glucokinase.